Here is a 285-residue protein sequence, read N- to C-terminus: Tropomyosin alpha-3 chain (285 aa).

A coiled-coil region spans residues 1–285 (MMEAIKKKMQ…DHALNDMTSI (285 aa)). Methionine 2 carries the N-acetylmethionine modification. An N-acetylalanine modification is found at methionine 2. Residue threonine 54 is modified to Phosphothreonine. Phosphoserine is present on residues serine 62 and serine 88. Threonine 109 carries the phosphothreonine modification. Phosphoserine occurs at positions 207 and 216. Residue isoleucine 228 is modified to N6-acetyllysine. At threonine 253 the chain carries Phosphothreonine. At tyrosine 262 the chain carries Phosphotyrosine. The residue at position 272 (serine 272) is a Phosphoserine. Threonine 283 carries the post-translational modification Phosphothreonine. Position 284 is a phosphoserine (serine 284).

The protein belongs to the tropomyosin family. Homodimer. Heterodimer of an alpha (TPM1, TPM3 or TPM4) and a beta (TPM2) chain. Interacts with TMOD1. Interacts with TNNT1.

It localises to the cytoplasm. It is found in the cytoskeleton. Functionally, binds to actin filaments in muscle and non-muscle cells. Plays a central role, in association with the troponin complex, in the calcium dependent regulation of vertebrate striated muscle contraction. Smooth muscle contraction is regulated by interaction with caldesmon. In non-muscle cells is implicated in stabilizing cytoskeleton actin filaments. The chain is Tropomyosin alpha-3 chain (Tpm3) from Mus musculus (Mouse).